Consider the following 835-residue polypeptide: Serine/threonine-protein kinase TNNI3K (835 aa).

Gly2 is lipidated: N-myristoyl glycine. The stretch at 21-50 (SESYAIIIERLEDNLQIKENEFQELRHIFG) forms a coiled coil. ANK repeat units lie at residues 66–96 (RGLS…RPSR), 100–129 (NGFP…DVQQ), 133–162 (GGLT…NVNV), 166–195 (VFFT…DVNV), 199–228 (VGDR…KADV), 234–263 (EDHV…EVQP), 269–298 (YGDT…TESL), 304–335 (FSET…NINH), 339–368 (DGHT…DMNL), and 381–410 (DEQT…PQEE). The region spanning 463-723 (IEFHEIIGSG…EVVSKLEECL (261 aa)) is the Protein kinase domain. ATP contacts are provided by residues 469-477 (IGSGSFGKV) and Lys490. The Proton acceptor role is filled by Asp588.

The protein belongs to the protein kinase superfamily. TKL Ser/Thr protein kinase family. MAP kinase kinase kinase subfamily. In terms of assembly, interacts with TNNI3, ACTC, ACTA1, MYBPC3, AIP, FABP3 and HADHB. Mg(2+) is required as a cofactor. Post-translationally, autophosphorylated.

It localises to the nucleus. The protein localises to the cytoplasm. The enzyme catalyses L-seryl-[protein] + ATP = O-phospho-L-seryl-[protein] + ADP + H(+). It catalyses the reaction L-threonyl-[protein] + ATP = O-phospho-L-threonyl-[protein] + ADP + H(+). Its function is as follows. May play a role in cardiac physiology. The polypeptide is Serine/threonine-protein kinase TNNI3K (Rattus norvegicus (Rat)).